Consider the following 114-residue polypeptide: Gamma-glutamylcyclotransferase family protein ytfP (114 aa).

This sequence belongs to the gamma-glutamylcyclotransferase family.

It localises to the cytoplasm. Its function is as follows. May play a role in antibiotic biosynthesis. In Citrobacter rodentium (strain ICC168) (Citrobacter freundii biotype 4280), this protein is Gamma-glutamylcyclotransferase family protein ytfP (ytfP).